A 47-amino-acid chain; its full sequence is Delta-stichotoxin-Hcr3a (47 aa).

Pro-3 is subject to Hydroxyproline. Intrachain disulfides connect Cys-4–Cys-44, Cys-6–Cys-34, and Cys-27–Cys-45.

The protein belongs to the sea anemone sodium channel inhibitory toxin family. Type I subfamily.

The protein localises to the secreted. It localises to the nematocyst. Inhibits voltage-gated sodium channels (Nav). This is Delta-stichotoxin-Hcr3a from Radianthus crispa (Leathery sea anemone).